Here is a 184-residue protein sequence, read N- to C-terminus: Photosystem I assembly protein Ycf4 (184 aa).

The next 2 membrane-spanning stretches (helical) occupy residues 22-42 (FCWA…GISS) and 57-77 (ILFF…LFIS).

The protein belongs to the Ycf4 family.

The protein resides in the plastid. Its subcellular location is the chloroplast thylakoid membrane. Seems to be required for the assembly of the photosystem I complex. The sequence is that of Photosystem I assembly protein Ycf4 from Illicium oligandrum (Star anise).